Here is a 176-residue protein sequence, read N- to C-terminus: Small ribosomal subunit protein uS5 (176 aa).

The region spanning 11–74 (LSEVLVDVNR…QAAKKRMMKV (64 aa)) is the S5 DRBM domain.

Belongs to the universal ribosomal protein uS5 family. In terms of assembly, part of the 30S ribosomal subunit. Contacts proteins S4 and S8.

With S4 and S12 plays an important role in translational accuracy. Functionally, located at the back of the 30S subunit body where it stabilizes the conformation of the head with respect to the body. This Rickettsia massiliae (strain Mtu5) protein is Small ribosomal subunit protein uS5.